The following is a 263-amino-acid chain: Undecaprenyl-diphosphatase (263 aa).

A run of 6 helical transmembrane segments spans residues 40-60, 87-107, 109-129, 186-206, 219-239, and 243-263; these read PGVL…LVYF, LLII…DFFV, AFHN…LLFF, FSFL…LLEW, AGAV…MGVV, and RLYA…AISS.

This sequence belongs to the UppP family.

The protein resides in the cell inner membrane. The enzyme catalyses di-trans,octa-cis-undecaprenyl diphosphate + H2O = di-trans,octa-cis-undecaprenyl phosphate + phosphate + H(+). In terms of biological role, catalyzes the dephosphorylation of undecaprenyl diphosphate (UPP). Confers resistance to bacitracin. The chain is Undecaprenyl-diphosphatase from Syntrophotalea carbinolica (strain DSM 2380 / NBRC 103641 / GraBd1) (Pelobacter carbinolicus).